A 447-amino-acid polypeptide reads, in one-letter code: Probable glycine dehydrogenase (decarboxylating) subunit 1 (447 aa).

This sequence belongs to the GcvP family. N-terminal subunit subfamily. In terms of assembly, the glycine cleavage system is composed of four proteins: P, T, L and H. In this organism, the P 'protein' is a heterodimer of two subunits.

It carries out the reaction N(6)-[(R)-lipoyl]-L-lysyl-[glycine-cleavage complex H protein] + glycine + H(+) = N(6)-[(R)-S(8)-aminomethyldihydrolipoyl]-L-lysyl-[glycine-cleavage complex H protein] + CO2. In terms of biological role, the glycine cleavage system catalyzes the degradation of glycine. The P protein binds the alpha-amino group of glycine through its pyridoxal phosphate cofactor; CO(2) is released and the remaining methylamine moiety is then transferred to the lipoamide cofactor of the H protein. This Bacillus anthracis (strain A0248) protein is Probable glycine dehydrogenase (decarboxylating) subunit 1.